We begin with the raw amino-acid sequence, 298 residues long: Lipoyl synthase (298 aa).

[4Fe-4S] cluster contacts are provided by cysteine 40, cysteine 45, cysteine 51, cysteine 67, cysteine 71, cysteine 74, and serine 280. The 217-residue stretch at 53-269 (AVRRTATFMI…KEIALSKGFS (217 aa)) folds into the Radical SAM core domain.

This sequence belongs to the radical SAM superfamily. Lipoyl synthase family. Requires [4Fe-4S] cluster as cofactor.

Its subcellular location is the cytoplasm. It catalyses the reaction [[Fe-S] cluster scaffold protein carrying a second [4Fe-4S](2+) cluster] + N(6)-octanoyl-L-lysyl-[protein] + 2 oxidized [2Fe-2S]-[ferredoxin] + 2 S-adenosyl-L-methionine + 4 H(+) = [[Fe-S] cluster scaffold protein] + N(6)-[(R)-dihydrolipoyl]-L-lysyl-[protein] + 4 Fe(3+) + 2 hydrogen sulfide + 2 5'-deoxyadenosine + 2 L-methionine + 2 reduced [2Fe-2S]-[ferredoxin]. It participates in protein modification; protein lipoylation via endogenous pathway; protein N(6)-(lipoyl)lysine from octanoyl-[acyl-carrier-protein]. Its function is as follows. Catalyzes the radical-mediated insertion of two sulfur atoms into the C-6 and C-8 positions of the octanoyl moiety bound to the lipoyl domains of lipoate-dependent enzymes, thereby converting the octanoylated domains into lipoylated derivatives. This is Lipoyl synthase from Geobacillus kaustophilus (strain HTA426).